The chain runs to 185 residues: MISVNDFRTGLTIVVDGQLYRVLDFQHVKPGKGAAFVRSKLRNLRNGSVNDKTFRAGEKVEKAQIDNRKMQYLYAQGDEHVFMDLESYEQTELASSAIEYELKFLKENMEVHIQSYQGEMLGVELPNTVQLEVTETEPGIKGDTASGGTKPATLETGLIVQVPFFVNQGDVLIINTEEGSYVSRA.

It belongs to the elongation factor P family.

It localises to the cytoplasm. Its pathway is protein biosynthesis; polypeptide chain elongation. In terms of biological role, involved in peptide bond synthesis. Stimulates efficient translation and peptide-bond synthesis on native or reconstituted 70S ribosomes in vitro. Probably functions indirectly by altering the affinity of the ribosome for aminoacyl-tRNA, thus increasing their reactivity as acceptors for peptidyl transferase. This chain is Elongation factor P, found in Lysinibacillus sphaericus (strain C3-41).